Reading from the N-terminus, the 30-residue chain is Photosystem I reaction center subunit XII (30 aa).

The chain crosses the membrane as a helical span at residues 6–26; it reads VFTILAIALVPAVMAALLGSA.

This sequence belongs to the PsaM family.

The protein localises to the cellular thylakoid membrane. The sequence is that of Photosystem I reaction center subunit XII from Synechococcus sp. (strain JA-3-3Ab) (Cyanobacteria bacterium Yellowstone A-Prime).